A 517-amino-acid chain; its full sequence is GMP synthase [glutamine-hydrolyzing] (517 aa).

Residues 9-199 form the Glutamine amidotransferase type-1 domain; sequence RILILDFGSQ…VLGVCGCERL (191 aa). Cys-86 acts as the Nucleophile in catalysis. Catalysis depends on residues His-173 and Glu-175. In terms of domain architecture, GMPS ATP-PPase spans 200 to 392; that stretch reads WTSESIIEDA…LGLPYNMLYR (193 aa). ATP is bound at residue 227 to 233; it reads SGGVDSS.

In terms of assembly, homodimer.

The catalysed reaction is XMP + L-glutamine + ATP + H2O = GMP + L-glutamate + AMP + diphosphate + 2 H(+). Its pathway is purine metabolism; GMP biosynthesis; GMP from XMP (L-Gln route): step 1/1. Catalyzes the synthesis of GMP from XMP. This chain is GMP synthase [glutamine-hydrolyzing], found in Vibrio parahaemolyticus serotype O3:K6 (strain RIMD 2210633).